The chain runs to 421 residues: Phosphoglycerate kinase, cytosolic (421 aa).

(2R)-3-phosphoglycerate-binding residues include V23, D24, F25, N26, R39, S61, H62, G64, R65, R135, H172, and R173. ADP contacts are provided by G218 and A219. Residue G218 coordinates CDP. Positions 219 and 220 each coordinate AMP. A219 is a binding site for ATP. Position 219 (A219) interacts with Mg(2+). K220 serves as a coordination point for (2R)-3-phosphoglycerate. D223 contacts CDP. A Mg(2+)-binding site is contributed by D223. The ADP site is built by K224 and G242. K224 is a binding site for AMP. Position 224 (K224) interacts with ATP. Residue G242 participates in CDP binding. A243 and A315 together coordinate AMP. A243 and A315 together coordinate ATP. ADP is bound by residues A315 and N339. The CDP site is built by G340 and F345. ADP-binding residues include F345, E346, D378, and S379. E346 contributes to the AMP binding site. Positions 346, 378, and 379 each coordinate ATP. Mg(2+) is bound at residue D378.

This sequence belongs to the phosphoglycerate kinase family. In terms of assembly, monomer. The cofactor is Mg(2+).

Its subcellular location is the cytoplasm. It catalyses the reaction (2R)-3-phosphoglycerate + ATP = (2R)-3-phospho-glyceroyl phosphate + ADP. It functions in the pathway carbohydrate degradation; glycolysis; pyruvate from D-glyceraldehyde 3-phosphate: step 2/5. The chain is Phosphoglycerate kinase, cytosolic from Trypanosoma brucei brucei.